A 198-amino-acid polypeptide reads, in one-letter code: Recombination protein RecR (198 aa).

The C4-type zinc finger occupies 57-72; sequence CSVCGNITDEDPCEIC. In terms of domain architecture, Toprim spans 80–175; sequence EMILVVEQPK…KVTRLAHGLA (96 aa).

It belongs to the RecR family.

May play a role in DNA repair. It seems to be involved in an RecBC-independent recombinational process of DNA repair. It may act with RecF and RecO. This chain is Recombination protein RecR, found in Latilactobacillus sakei subsp. sakei (strain 23K) (Lactobacillus sakei subsp. sakei).